The following is a 388-amino-acid chain: Flap endonuclease 1 (388 aa).

Positions 1 to 105 (MGIKNLTSLI…GELAKRYARR (105 aa)) are N-domain. Aspartate 34 serves as a coordination point for Mg(2+). Position 71 (arginine 71) interacts with DNA. Mg(2+) is bound by residues aspartate 87, glutamate 159, glutamate 161, aspartate 180, and aspartate 182. The tract at residues 123–254 (DVQKFQKRTI…KKSFDMITKH (132 aa)) is I-domain. A DNA-binding site is contributed by glutamate 159. The DNA site is built by glycine 232 and aspartate 234. Aspartate 234 contributes to the Mg(2+) binding site. The segment at 338–346 (VQTRIDTFF) is interaction with PCNA. The tract at residues 349-388 (IKRPRDEDAGSAKKKQKTVAKPGAAGSKKKPAAKKAAGKK) is disordered. Over residues 375–388 (SKKKPAAKKAAGKK) the composition is skewed to basic residues.

Belongs to the XPG/RAD2 endonuclease family. FEN1 subfamily. In terms of assembly, interacts with PCNA. Three molecules of repG bind to one PCNA trimer with each molecule binding to one PCNA monomer. PCNA stimulates the nuclease activity without altering cleavage specificity. Mg(2+) serves as cofactor. In terms of processing, phosphorylated. Phosphorylation upon DNA damage induces relocalization to the nuclear plasma.

The protein resides in the nucleus. Its subcellular location is the nucleolus. The protein localises to the nucleoplasm. It localises to the mitochondrion. Structure-specific nuclease with 5'-flap endonuclease and 5'-3' exonuclease activities involved in DNA replication and repair. During DNA replication, cleaves the 5'-overhanging flap structure that is generated by displacement synthesis when DNA polymerase encounters the 5'-end of a downstream Okazaki fragment. It enters the flap from the 5'-end and then tracks to cleave the flap base, leaving a nick for ligation. Also involved in the long patch base excision repair (LP-BER) pathway, by cleaving within the apurinic/apyrimidinic (AP) site-terminated flap. Acts as a genome stabilization factor that prevents flaps from equilibrating into structures that lead to duplications and deletions. Also possesses 5'-3' exonuclease activity on nicked or gapped double-stranded DNA, and exhibits RNase H activity. Also involved in replication and repair of rDNA and in repairing mitochondrial DNA. This is Flap endonuclease 1 from Heterostelium pallidum (strain ATCC 26659 / Pp 5 / PN500) (Cellular slime mold).